A 395-amino-acid chain; its full sequence is Phosphoribulokinase, chloroplastic (395 aa).

The transit peptide at 1-46 (MAVSTIYSTQALNSTHFLTSSSSSKQVFLYRRQPQTNRRFNTLITC) directs the protein to the chloroplast. Residues C61 and C100 are joined by a disulfide bond.

The protein belongs to the phosphoribulokinase family.

It localises to the plastid. Its subcellular location is the chloroplast. It catalyses the reaction D-ribulose 5-phosphate + ATP = D-ribulose 1,5-bisphosphate + ADP + H(+). It functions in the pathway carbohydrate biosynthesis; Calvin cycle. With respect to regulation, light regulated via thioredoxin by reversible oxidation/reduction of sulfhydryl/disulfide groups. In Arabidopsis thaliana (Mouse-ear cress), this protein is Phosphoribulokinase, chloroplastic.